A 429-amino-acid chain; its full sequence is Keratin, type I cytoskeletal 18 (429 aa).

The tract at residues 2-78 is head; it reads SYSRSVYSSS…NVNLIGGGQN (77 aa). Residues 79-114 form a coil 1A region; sequence EKETMQDLNDRLASYLERVRSLEAANKKLEVQIRQH. The 311-residue stretch at 79–389 folds into the IF rod domain; that stretch reads EKETMQDLND…RLLEGDGSFD (311 aa). Residues 115–130 are linker 1; sequence TEKKGPSKDWSPYYKT. Residues 131–222 are coil 1B; the sequence is IEDLRKQVFD…KNHQDDVTEL (92 aa). The interval 223–246 is linker 12; it reads QAQVARSAVTVEVDAPKSQDLGKI. The segment at 247–385 is coil 2; it reads MTELRAQYDG…HTYRRLLEGD (139 aa). The tract at residues 386-429 is tail; that stretch reads GSFDLQDAVPTVTTQTVKKVITTTQRIVDGKVVSESNDTEVLKS.

The protein belongs to the intermediate filament family. In terms of assembly, heterotetramer of two type I and two type II keratins. Keratin-18 associates with keratin-8. Phosphorylated. Post-translationally, proteolytically cleaved by caspases during epithelial cell apoptosis.

Functionally, when phosphorylated, plays a role in filament reorganization. The sequence is that of Keratin, type I cytoskeletal 18 from Xenopus tropicalis (Western clawed frog).